The following is a 507-amino-acid chain: Histidine ammonia-lyase (507 aa).

The 5-imidazolinone (Ala-Gly) cross-link spans 141–143 (ASG). Ser142 is modified (2,3-didehydroalanine (Ser)).

This sequence belongs to the PAL/histidase family. Contains an active site 4-methylidene-imidazol-5-one (MIO), which is formed autocatalytically by cyclization and dehydration of residues Ala-Ser-Gly.

The protein localises to the cytoplasm. The catalysed reaction is L-histidine = trans-urocanate + NH4(+). Its pathway is amino-acid degradation; L-histidine degradation into L-glutamate; N-formimidoyl-L-glutamate from L-histidine: step 1/3. The chain is Histidine ammonia-lyase from Burkholderia pseudomallei (strain 668).